The chain runs to 304 residues: Large ribosomal subunit protein uL18 (304 aa).

This sequence belongs to the universal ribosomal protein uL18 family. In terms of assembly, component of a hexameric 5S RNP precursor complex, composed of 5S RNA, RRS1, RPF2, RPL5, RPL11 and SYO1; this complex acts as a precursor for ribosome assembly.

The protein resides in the cytoplasm. Its function is as follows. Component of the ribosome, a large ribonucleoprotein complex responsible for the synthesis of proteins in the cell. The small ribosomal subunit (SSU) binds messenger RNAs (mRNAs) and translates the encoded message by selecting cognate aminoacyl-transfer RNA (tRNA) molecules. The large subunit (LSU) contains the ribosomal catalytic site termed the peptidyl transferase center (PTC), which catalyzes the formation of peptide bonds, thereby polymerizing the amino acids delivered by tRNAs into a polypeptide chain. The nascent polypeptides leave the ribosome through a tunnel in the LSU and interact with protein factors that function in enzymatic processing, targeting, and the membrane insertion of nascent chains at the exit of the ribosomal tunnel. This chain is Large ribosomal subunit protein uL18, found in Chaetomium thermophilum (strain DSM 1495 / CBS 144.50 / IMI 039719) (Thermochaetoides thermophila).